The primary structure comprises 155 residues: Photosystem II extrinsic protein V (155 aa).

The N-terminal stretch at 1 to 20 (MFVKMIGWLVLFLFAHQTWA) is a signal peptide. Heme c is bound by residues Cys50, Cys53, His54, and His105.

This sequence belongs to the cytochrome c family. PsbV subfamily. As to quaternary structure, PSII is composed of 1 copy each of membrane proteins PsbA, PsbB, PsbC, PsbD, PsbE, PsbF, PsbH, PsbI, PsbJ, PsbK, PsbL, PsbM, PsbT, PsbY, PsbZ, Psb30/Ycf12, at least 3 peripheral proteins of the oxygen-evolving complex and a large number of cofactors. It forms dimeric complexes. The extrinsic subunits in red algae are PsbO (OEC33), PsbQ', cytochrome c-550 and PsbU. Requires heme c as cofactor.

The protein localises to the plastid. Its subcellular location is the chloroplast thylakoid membrane. One of the extrinsic, lumenal subunits of photosystem II (PSII). PSII is a light-driven water plastoquinone oxidoreductase, using light energy to abstract electrons from H(2)O, generating a proton gradient subsequently used for ATP formation. The extrinsic proteins stabilize the structure of photosystem II oxygen-evolving complex (OEC), the ion environment of oxygen evolution and protect the OEC against heat-induced inactivation. Unlike the T.vulcanus ortholog, it does not bind by itself to PSII, but requires all extrinsic members of the OEC. This Cyanidium caldarium (Red alga) protein is Photosystem II extrinsic protein V.